Reading from the N-terminus, the 742-residue chain is Two pore calcium channel protein 1 (742 aa).

The tract at residues 1–37 (MSEAEAPLITEEAAERGLASSGSRRLSDGAGGQGSRK) is disordered. Over 1–82 (MSEAEAPLIT…NDTRFGRAMS (82 aa)) the chain is Cytoplasmic. Residues 83–103 (FYFVYLRLDWLWSLNLFALIL) traverse the membrane as a helical segment. The Extracellular portion of the chain corresponds to 104 to 140 (LNFLEKPLWCRKDALQAYDQRDLYFLGQLPYFSKTES). Residues 141 to 161 (LIYEGLTLVILVMDIFCPLSY) form a helical membrane-spanning segment. Over 162–176 (EGLNIFWRSTTNKLK) the chain is Cytoplasmic. The helical transmembrane segment at 177–197 (IVLLFILACDILVFAFSSQPF) threads the bilayer. Residues 198 to 204 (RLAPYIR) are Extracellular-facing. A helical; Voltage-sensor membrane pass occupies residues 205 to 226 (VVFLIMTIRELRMCAITLAGLI). A helical transmembrane segment spans residues 227 to 247 (GTYLNVLALSLLFLLFASWLA). The Extracellular segment spans residues 248-258 (YVTFEDTPQGK). The pore-forming intramembrane region spans 259 to 273 (TIFSSYGVTLYQMFV). Topologically, residues 274-296 (LFTTSNNPDVWVHAYKIPRWYSL) are extracellular. Residues 297-317 (FFIVYVLLGVYFLTNLILAVI) traverse the membrane as a helical segment. Over 318–446 (YDSFKEQFAK…SFVRSRMFEY (129 aa)) the chain is Cytoplasmic. EF-hand domains follow at residues 335–370 (IRKNILQKAFDLIDTNNRGYLDREQCISLLNELNKY) and 376–411 (TSREDFELIFAELDRSGDFKVTSEEFADLCNTIAIK). A helical transmembrane segment spans residues 447-467 (IIVFVLLINLVAVIIETTLDI). Residues 468–480 (ENSSSQETWQEVE) are Extracellular-facing. Asparagine 469 carries an N-linked (GlcNAc...) asparagine glycan. The helical transmembrane segment at 481-501 (FFLGWIYVAEMALKIFSLGFG) threads the bilayer. Topologically, residues 502-510 (AYWMEGQNK) are cytoplasmic. The helical transmembrane segment at 511–531 (FDFVLTWTIFIGETLTFAFPS) threads the bilayer. The Extracellular portion of the chain corresponds to 532 to 540 (KLPFLSNGE). A helical; Voltage-sensor membrane pass occupies residues 541–558 (WIRYLLLGRVLRLTRILL). Topologically, residues 559 to 582 (QVQRFRAFVATFFTLMSSLMPYLG) are cytoplasmic. Residues 583 to 603 (IVFCVLCMYCSIGLQIFGGIV) form a helical membrane-spanning segment. Residues 604–627 (YAGNPTLEETDLFNNDYLLFNFND) lie on the Extracellular side of the membrane. The pore-forming intramembrane region spans 628–642 (YPSGMVTLFNLLVMG). Residues 643 to 663 (NWQVWMESYWQLTGTSWSLIY) are Extracellular-facing. The chain crosses the membrane as a helical span at residues 664–684 (FVSFYLISILLLLNLIVAFVL). At 685–742 (EAFFAEMELEKGEEVDIQNPTSGGIKKRRSMRVRSKGTMVDILLHHMLSNELDGSQNS) the chain is on the cytoplasmic side.

It belongs to the calcium channel alpha-1 subunit (TC 1.A.1.11) family. Two pore calcium channel subfamily. As to quaternary structure, homodimer.

Its subcellular location is the membrane. Its activity is regulated as follows. Inhibited by Al(3+). Its function is as follows. Functions as a voltage-gated inward-rectifying Ca(2+) channel (VDCC) across the plasma membrane that mediates sucrose-induced Ca(2+) influx in autotrophically grown leaf cells. Acts as the major ROS-responsive Ca(2+) channel and is the possible target of Al-dependent inhibition. Plays a regulatory role in defense responses. The chain is Two pore calcium channel protein 1 (TPC1) from Triticum aestivum (Wheat).